The sequence spans 569 residues: Methionine--tRNA ligase (569 aa).

The 'HIGH' region motif lies at 11–21 (PYINGVKHLGN). Zn(2+) is bound by residues Cys-143, Cys-146, Cys-156, and Cys-159. Residues 342–346 (KFSTS) carry the 'KMSKS' region motif. Thr-345 is an ATP binding site.

The protein belongs to the class-I aminoacyl-tRNA synthetase family. MetG type 1 subfamily. As to quaternary structure, monomer. Zn(2+) is required as a cofactor.

Its subcellular location is the cytoplasm. It catalyses the reaction tRNA(Met) + L-methionine + ATP = L-methionyl-tRNA(Met) + AMP + diphosphate. In terms of biological role, is required not only for elongation of protein synthesis but also for the initiation of all mRNA translation through initiator tRNA(fMet) aminoacylation. This chain is Methionine--tRNA ligase, found in Caulobacter sp. (strain K31).